A 152-amino-acid polypeptide reads, in one-letter code: Nucleoside diphosphate kinase (152 aa).

Residues lysine 11, phenylalanine 59, arginine 87, threonine 93, arginine 104, and asparagine 114 each coordinate ATP. The active-site Pros-phosphohistidine intermediate is histidine 117.

Belongs to the NDK family. Homotetramer. Mg(2+) serves as cofactor.

Its subcellular location is the cytoplasm. The enzyme catalyses a 2'-deoxyribonucleoside 5'-diphosphate + ATP = a 2'-deoxyribonucleoside 5'-triphosphate + ADP. It catalyses the reaction a ribonucleoside 5'-diphosphate + ATP = a ribonucleoside 5'-triphosphate + ADP. Its function is as follows. Major role in the synthesis of nucleoside triphosphates other than ATP. The ATP gamma phosphate is transferred to the NDP beta phosphate via a ping-pong mechanism, using a phosphorylated active-site intermediate. This Prochlorococcus marinus (strain MIT 9515) protein is Nucleoside diphosphate kinase.